The chain runs to 234 residues: ATP synthase subunit a 2 (234 aa).

Transmembrane regions (helical) follow at residues A20–T40, Y78–I98, S107–V127, V169–V189, and L194–I214.

Belongs to the ATPase A chain family. In terms of assembly, F-type ATPases have 2 components, CF(1) - the catalytic core - and CF(0) - the membrane proton channel. CF(1) has five subunits: alpha(3), beta(3), gamma(1), delta(1), epsilon(1). CF(0) has four main subunits: a, b, b' and c.

It localises to the cellular thylakoid membrane. Its function is as follows. Key component of the proton channel; it plays a direct role in the translocation of protons across the membrane. The chain is ATP synthase subunit a 2 from Acaryochloris marina (strain MBIC 11017).